The sequence spans 205 residues: Small ribosomal subunit protein uS5 (205 aa).

The 64-residue stretch at 49 to 112 (LVDEVLDINM…VSAKINLVKV (64 aa)) folds into the S5 DRBM domain.

It belongs to the universal ribosomal protein uS5 family. As to quaternary structure, part of the 30S ribosomal subunit. Contacts protein S4.

Functionally, with S4 and S12 plays an important role in translational accuracy. This is Small ribosomal subunit protein uS5 from Methanospirillum hungatei JF-1 (strain ATCC 27890 / DSM 864 / NBRC 100397 / JF-1).